A 302-amino-acid polypeptide reads, in one-letter code: Oxygen-dependent coproporphyrinogen-III oxidase (302 aa).

Position 94 (S94) interacts with substrate. Residues H98 and H108 each coordinate a divalent metal cation. The active-site Proton donor is the H108. 110-112 (NVR) lines the substrate pocket. A divalent metal cation contacts are provided by H147 and H177. Residues 242 to 277 (YVEFNLVWDRGTLFGLQTGGRTESILMSMPPLVRWE) are important for dimerization. 260-262 (GGR) provides a ligand contact to substrate.

Belongs to the aerobic coproporphyrinogen-III oxidase family. Homodimer. Requires a divalent metal cation as cofactor.

It localises to the cytoplasm. It catalyses the reaction coproporphyrinogen III + O2 + 2 H(+) = protoporphyrinogen IX + 2 CO2 + 2 H2O. Its pathway is porphyrin-containing compound metabolism; protoporphyrin-IX biosynthesis; protoporphyrinogen-IX from coproporphyrinogen-III (O2 route): step 1/1. Its function is as follows. Involved in the heme biosynthesis. Catalyzes the aerobic oxidative decarboxylation of propionate groups of rings A and B of coproporphyrinogen-III to yield the vinyl groups in protoporphyrinogen-IX. The protein is Oxygen-dependent coproporphyrinogen-III oxidase of Erwinia tasmaniensis (strain DSM 17950 / CFBP 7177 / CIP 109463 / NCPPB 4357 / Et1/99).